We begin with the raw amino-acid sequence, 131 residues long: Small ribosomal subunit protein uS8 (131 aa).

It belongs to the universal ribosomal protein uS8 family. In terms of assembly, part of the 30S ribosomal subunit. Contacts proteins S5 and S12.

One of the primary rRNA binding proteins, it binds directly to 16S rRNA central domain where it helps coordinate assembly of the platform of the 30S subunit. This Polaromonas naphthalenivorans (strain CJ2) protein is Small ribosomal subunit protein uS8.